The chain runs to 261 residues: Triosephosphate isomerase (261 aa).

10–12 lines the substrate pocket; it reads NWK. H100 (electrophile) is an active-site residue. E172 (proton acceptor) is an active-site residue. Residues G178, S218, and 239 to 240 each bind substrate; that span reads GG.

The protein belongs to the triosephosphate isomerase family. Homodimer.

It is found in the cytoplasm. It carries out the reaction D-glyceraldehyde 3-phosphate = dihydroxyacetone phosphate. It functions in the pathway carbohydrate biosynthesis; gluconeogenesis. Its pathway is carbohydrate degradation; glycolysis; D-glyceraldehyde 3-phosphate from glycerone phosphate: step 1/1. Functionally, involved in the gluconeogenesis. Catalyzes stereospecifically the conversion of dihydroxyacetone phosphate (DHAP) to D-glyceraldehyde-3-phosphate (G3P). This chain is Triosephosphate isomerase, found in Mycobacterium marinum (strain ATCC BAA-535 / M).